The primary structure comprises 324 residues: MSKRIFARIAGTGGYLPEKVLTNNDLAHIVDTSDEWIRTRTGIRERHIAAEGETTSDLAYEAAIRALEAAEVRSADLDLIVVGTTTPDLIFPSTACLLQARLGAVGCGAFDVNAACSGFVYALSVAEKFVSSGCSKTVLVVGADTLTRIIDWSDRTTCVLFGDGAGAVVLKADEDTGILSTHLHADGSKKELLWDPVGVSVGFGEGKDCGALLMKGNEVFKYAVKALDRVVDETLEANHLDKHELDWLIPHQANLRIIEATARRLDMSMNQVVVTVDRHGNTSTASVPLALDEAIRSGRVQRGQLLLLEAFGGGFTWGSALLRY.

Catalysis depends on residues cysteine 116 and histidine 251. The tract at residues 252 to 256 (QANLR) is ACP-binding. Asparagine 281 is an active-site residue.

It belongs to the thiolase-like superfamily. FabH family. As to quaternary structure, homodimer.

The protein localises to the cytoplasm. It carries out the reaction malonyl-[ACP] + acetyl-CoA + H(+) = 3-oxobutanoyl-[ACP] + CO2 + CoA. Its pathway is lipid metabolism; fatty acid biosynthesis. Catalyzes the condensation reaction of fatty acid synthesis by the addition to an acyl acceptor of two carbons from malonyl-ACP. Catalyzes the first condensation reaction which initiates fatty acid synthesis and may therefore play a role in governing the total rate of fatty acid production. Possesses both acetoacetyl-ACP synthase and acetyl transacylase activities. Its substrate specificity determines the biosynthesis of branched-chain and/or straight-chain of fatty acids. This Xylella fastidiosa (strain Temecula1 / ATCC 700964) protein is Beta-ketoacyl-[acyl-carrier-protein] synthase III.